Here is a 144-residue protein sequence, read N- to C-terminus: MESPLGSDLARLVRIWRALIDHRLKPLELTQTHWVTLHNIHQLPPDQSQIQLAKAIGIEQPSLVRTLDQLEDKGLISRQTCASDRRAKRIKLTEKAEPLIAEMEEVIHKTRGEILAGISSEEIELLIKLVAKLEHNIMELHSHD.

The HTH marR-type domain maps to 2–135 (ESPLGSDLAR…LIKLVAKLEH (134 aa)). Residues 49–72 (QIQLAKAIGIEQPSLVRTLDQLED) constitute a DNA-binding region (H-T-H motif).

Belongs to the SlyA family. As to quaternary structure, homodimer.

Its function is as follows. Transcription regulator that can specifically activate or repress expression of target genes. Required to activate expression of virulent genes. This chain is Transcriptional regulator SlyA, found in Salmonella choleraesuis (strain SC-B67).